Here is a 434-residue protein sequence, read N- to C-terminus: Tol-Pal system protein TolB (434 aa).

Residues methionine 1–alanine 24 form the signal peptide.

Belongs to the TolB family. As to quaternary structure, the Tol-Pal system is composed of five core proteins: the inner membrane proteins TolA, TolQ and TolR, the periplasmic protein TolB and the outer membrane protein Pal. They form a network linking the inner and outer membranes and the peptidoglycan layer.

The protein resides in the periplasm. Its function is as follows. Part of the Tol-Pal system, which plays a role in outer membrane invagination during cell division and is important for maintaining outer membrane integrity. In Histophilus somni (strain 2336) (Haemophilus somnus), this protein is Tol-Pal system protein TolB.